The primary structure comprises 293 residues: Large ribosomal subunit protein uL18 (293 aa).

Residues 247–263 are compositionally biased toward basic and acidic residues; that stretch reads IRANPAHEKKQPRDGLV. Residues 247–283 are disordered; that stretch reads IRANPAHEKKQPRDGLVKKRWNRAKMSLKQKRDRVKQ. Residues 264–283 show a composition bias toward basic residues; it reads KKRWNRAKMSLKQKRDRVKQ.

It belongs to the universal ribosomal protein uL18 family. As to quaternary structure, component of the large ribosomal subunit (LSU).

Its subcellular location is the cytoplasm. The protein localises to the nucleus. Component of the ribosome, a large ribonucleoprotein complex responsible for the synthesis of proteins in the cell. The small ribosomal subunit (SSU) binds messenger RNAs (mRNAs) and translates the encoded message by selecting cognate aminoacyl-transfer RNA (tRNA) molecules. The large subunit (LSU) contains the ribosomal catalytic site termed the peptidyl transferase center (PTC), which catalyzes the formation of peptide bonds, thereby polymerizing the amino acids delivered by tRNAs into a polypeptide chain. The nascent polypeptides leave the ribosome through a tunnel in the LSU and interact with protein factors that function in enzymatic processing, targeting, and the membrane insertion of nascent chains at the exit of the ribosomal tunnel. The polypeptide is Large ribosomal subunit protein uL18 (RPL5) (Suberites domuncula (Sponge)).